A 347-amino-acid polypeptide reads, in one-letter code: MRVIKRNLRGDEGEISLVAESLDDLWHLKHLVSPGDLVFATTQRKISGATDKLRPEKAERRTVRLGISVEAVEFHTYSNWLRIHGVIKSGVDIGSYHTLNIEAGSELSIIKRWRPDELQRIEEAVAESNRPRVVLALVEEGEATIGVLRQFGVQTVAEIRGGSGKGSGSSVRDDFLKEVADQIANSAGDDAYVVLAGPGFTKEDLRKVMEARYPDLLKRLTMDDASSTGRSGFQEVLRRGTVDRIVEASRISRETRLMDDLMKEIATDGRAAYGIREVREAANYGAIETLMIVDQLVRRGDVESLIRDVAAGRGRVVIFSTEFEPGERLEALGGVAALLRFRIPGAS.

It belongs to the eukaryotic release factor 1 family. Pelota subfamily. In terms of assembly, monomer. A divalent metal cation serves as cofactor.

It is found in the cytoplasm. In terms of biological role, may function in recognizing stalled ribosomes, interact with stem-loop structures in stalled mRNA molecules, and effect endonucleolytic cleavage of the mRNA. May play a role in the release non-functional ribosomes and degradation of damaged mRNAs. Has endoribonuclease activity. The polypeptide is Protein pelota homolog (Methanothrix thermoacetophila (strain DSM 6194 / JCM 14653 / NBRC 101360 / PT) (Methanosaeta thermophila)).